The primary structure comprises 185 residues: NADH-ubiquinone oxidoreductase chain 6 (185 aa).

Transmembrane regions (helical) follow at residues 4–24 (LTYYFIEITIFLAILCTIFII), 33–53 (ILYMIALFVIAAMYLYLIGLG), 54–74 (IFSLLYIMIYIGAIAVLFLFI), 94–114 (LPLVLISLIVLTISGLMIYSN), and 159–179 (AFILLVLAIVLLLGIIGPISI).

The protein belongs to the complex I subunit 6 family. In terms of assembly, complex I is composed of 37 different subunits.

Its subcellular location is the mitochondrion membrane. The enzyme catalyses a ubiquinone + NADH + 5 H(+)(in) = a ubiquinol + NAD(+) + 4 H(+)(out). Functionally, core subunit of the mitochondrial membrane respiratory chain NADH dehydrogenase (Complex I) that is believed to belong to the minimal assembly required for catalysis. Complex I functions in the transfer of electrons from NADH to the respiratory chain. The immediate electron acceptor for the enzyme is believed to be ubiquinone. The sequence is that of NADH-ubiquinone oxidoreductase chain 6 (ND6) from Yarrowia lipolytica (strain CLIB 122 / E 150) (Yeast).